Here is a 256-residue protein sequence, read N- to C-terminus: Imidazole glycerol phosphate synthase subunit HisF (256 aa).

Residues aspartate 11 and aspartate 130 contribute to the active site.

Belongs to the HisA/HisF family. Heterodimer of HisH and HisF.

The protein localises to the cytoplasm. It carries out the reaction 5-[(5-phospho-1-deoxy-D-ribulos-1-ylimino)methylamino]-1-(5-phospho-beta-D-ribosyl)imidazole-4-carboxamide + L-glutamine = D-erythro-1-(imidazol-4-yl)glycerol 3-phosphate + 5-amino-1-(5-phospho-beta-D-ribosyl)imidazole-4-carboxamide + L-glutamate + H(+). The protein operates within amino-acid biosynthesis; L-histidine biosynthesis; L-histidine from 5-phospho-alpha-D-ribose 1-diphosphate: step 5/9. Its function is as follows. IGPS catalyzes the conversion of PRFAR and glutamine to IGP, AICAR and glutamate. The HisF subunit catalyzes the cyclization activity that produces IGP and AICAR from PRFAR using the ammonia provided by the HisH subunit. The protein is Imidazole glycerol phosphate synthase subunit HisF of Methylocella silvestris (strain DSM 15510 / CIP 108128 / LMG 27833 / NCIMB 13906 / BL2).